We begin with the raw amino-acid sequence, 429 residues long: 4-hydroxybutyrate coenzyme A transferase (429 aa).

215–219 serves as a coordination point for CoA; the sequence is GIGAI. Glutamate 238 serves as the catalytic 5-glutamyl coenzyme A thioester intermediate. A CoA-binding site is contributed by glycine 336.

This sequence belongs to the acetyl-CoA hydrolase/transferase family.

In Clostridium kluyveri (strain ATCC 8527 / DSM 555 / NBRC 12016 / NCIMB 10680 / K1), this protein is 4-hydroxybutyrate coenzyme A transferase (cat2).